The sequence spans 24 residues: MCDILLNVLNIVFIGIAIILVIIC.

Residues 4 to 24 (ILLNVLNIVFIGIAIILVIIC) traverse the membrane as a helical segment.

The protein resides in the cell inner membrane. The polypeptide is Protein YahV (Escherichia coli (strain K12)).